Reading from the N-terminus, the 118-residue chain is MDDSKVSGGKVKKPGKRGRKPAKIDLKAKLERSRQSARECRARKKLRYQYLEELVSSRERAICALREELEMYKQWCAAMDQGKIPSEIKALLSGEDLKAAPNQVKHRAVKTEQKEKCP.

The interval 1–25 is disordered; that stretch reads MDDSKVSGGKVKKPGKRGRKPAKID. Basic residues predominate over residues 10-21; sequence KVKKPGKRGRKP. Residues 23–86 form the bZIP domain; it reads KIDLKAKLER…AAMDQGKIPS (64 aa). The basic motif stretch occupies residues 29–60; the sequence is KLERSRQSARECRARKKLRYQYLEELVSSRER. The segment at 62–69 is leucine-zipper; that stretch reads ICALREEL.

The protein belongs to the bZIP family. ATF subfamily.

It localises to the nucleus. Functionally, probable regulator of creb1 transcriptional activity which is involved in adipose cells differentiation. May also play a regulatory role in the cell cycle. The protein is cAMP-responsive element-binding protein-like 2 (crebl2) of Xenopus tropicalis (Western clawed frog).